Consider the following 428-residue polypeptide: 3-phosphoshikimate 1-carboxyvinyltransferase (428 aa).

3 residues coordinate 3-phosphoshikimate: K23, S24, and R28. K23 contributes to the phosphoenolpyruvate binding site. Positions 97 and 125 each coordinate phosphoenolpyruvate. 3-phosphoshikimate-binding residues include S170, S171, Q172, S198, D314, N337, and K341. A phosphoenolpyruvate-binding site is contributed by Q172. D314 acts as the Proton acceptor in catalysis. The phosphoenolpyruvate site is built by R345, R387, and K412.

Belongs to the EPSP synthase family. As to quaternary structure, monomer.

It localises to the cytoplasm. The enzyme catalyses 3-phosphoshikimate + phosphoenolpyruvate = 5-O-(1-carboxyvinyl)-3-phosphoshikimate + phosphate. It participates in metabolic intermediate biosynthesis; chorismate biosynthesis; chorismate from D-erythrose 4-phosphate and phosphoenolpyruvate: step 6/7. Functionally, catalyzes the transfer of the enolpyruvyl moiety of phosphoenolpyruvate (PEP) to the 5-hydroxyl of shikimate-3-phosphate (S3P) to produce enolpyruvyl shikimate-3-phosphate and inorganic phosphate. This Cronobacter sakazakii (strain ATCC BAA-894) (Enterobacter sakazakii) protein is 3-phosphoshikimate 1-carboxyvinyltransferase.